Consider the following 87-residue polypeptide: HssA/B-like protein 18 (87 aa).

The protein belongs to the hssA/B family.

This chain is HssA/B-like protein 18 (hssl18), found in Dictyostelium discoideum (Social amoeba).